A 98-amino-acid polypeptide reads, in one-letter code: Putative defensin-like protein 233 (98 aa).

The N-terminal stretch at 1 to 28 is a signal peptide; that stretch reads MGMWCTTLFMVSCVSICLILSHVQEVEA. 4 disulfides stabilise this stretch: Cys-35–Cys-96, Cys-45–Cys-70, Cys-53–Cys-86, and Cys-68–Cys-88.

Belongs to the DEFL family. As to expression, expressed at least in stem, root, rosette leaves and flower buds.

The protein localises to the secreted. The polypeptide is Putative defensin-like protein 233 (SCRL22) (Arabidopsis thaliana (Mouse-ear cress)).